The following is a 472-amino-acid chain: Glutamine synthetase (472 aa).

One can recognise a GS beta-grasp domain in the interval 17-101; sequence NNVKFVLLRF…IRCSVYEPTT (85 aa). The region spanning 109-472 is the GS catalytic domain; the sequence is PRSIAIRAEN…HPVEFEMYYA (364 aa). Residues Glu134 and Glu136 each coordinate Mg(2+). ATP is bound at residue Glu212. Mg(2+) contacts are provided by Glu217 and Glu225. Residues 269-270 and Gly270 contribute to the L-glutamate site; that span reads NG. Residue His274 participates in Mg(2+) binding. Residues 276–278 and Ser278 each bind ATP; that span reads NMS. Residues Arg326, Glu332, and Arg344 each coordinate L-glutamate. ATP contacts are provided by Arg344, Arg349, and Lys357. Glu362 contributes to the Mg(2+) binding site. Arg364 lines the L-glutamate pocket. Tyr402 is modified (O-AMP-tyrosine).

Belongs to the glutamine synthetase family. Oligomer of 12 subunits arranged in the form of two hexameric ring. Requires Mg(2+) as cofactor.

It localises to the cytoplasm. The enzyme catalyses L-glutamate + NH4(+) + ATP = L-glutamine + ADP + phosphate + H(+). With respect to regulation, the activity of this enzyme could be controlled by adenylation under conditions of abundant glutamine. Functionally, catalyzes the ATP-dependent biosynthesis of glutamine from glutamate and ammonia. The sequence is that of Glutamine synthetase from Haemophilus influenzae (strain ATCC 51907 / DSM 11121 / KW20 / Rd).